The sequence spans 164 residues: Pyruvoyl-dependent arginine decarboxylase (164 aa).

Ser52 is modified (pyruvic acid (Ser)).

Belongs to the PdaD family. Pyruvate serves as cofactor.

It carries out the reaction L-arginine + H(+) = agmatine + CO2. The polypeptide is Pyruvoyl-dependent arginine decarboxylase (Methanococcus maripaludis (strain C5 / ATCC BAA-1333)).